The following is a 376-amino-acid chain: Chaperone protein DnaJ (376 aa).

Positions 5–70 (DYYEILGVSK…QKRAAYDQYG (66 aa)) constitute a J domain. The segment at 131–209 (GVTKEIRIPT…CHGHGRVERS (79 aa)) adopts a CR-type zinc-finger fold. 8 residues coordinate Zn(2+): cysteine 144, cysteine 147, cysteine 161, cysteine 164, cysteine 183, cysteine 186, cysteine 197, and cysteine 200. 4 CXXCXGXG motif repeats span residues 144 to 151 (CDVCHGSG), 161 to 168 (CPTCHGSG), 183 to 190 (CPHCQGRG), and 197 to 204 (CNKCHGHG).

Belongs to the DnaJ family. Homodimer. Zn(2+) serves as cofactor.

It localises to the cytoplasm. Functionally, participates actively in the response to hyperosmotic and heat shock by preventing the aggregation of stress-denatured proteins and by disaggregating proteins, also in an autonomous, DnaK-independent fashion. Unfolded proteins bind initially to DnaJ; upon interaction with the DnaJ-bound protein, DnaK hydrolyzes its bound ATP, resulting in the formation of a stable complex. GrpE releases ADP from DnaK; ATP binding to DnaK triggers the release of the substrate protein, thus completing the reaction cycle. Several rounds of ATP-dependent interactions between DnaJ, DnaK and GrpE are required for fully efficient folding. Also involved, together with DnaK and GrpE, in the DNA replication of plasmids through activation of initiation proteins. In Escherichia coli O157:H7 (strain EC4115 / EHEC), this protein is Chaperone protein DnaJ.